A 746-amino-acid polypeptide reads, in one-letter code: NAD(P)H-quinone oxidoreductase subunit 5, chloroplastic (746 aa).

The next 16 membrane-spanning stretches (helical) occupy residues 9–29 (WIIP…LLLF), 40–60 (WTFL…YLSI), 89–109 (IDPL…LVLI), 125–145 (FAYL…SNLI), 147–167 (VYFF…FWFT), 185–205 (GDFG…SFEF), 221–241 (VNLL…IAKS), 258–278 (TPIS…FLVA), 280–300 (LLPL…IGII), 327–347 (LGYM…FHLI), 354–374 (ALLF…VGYS), 396–416 (TAFL…WFWS), 425–445 (LLFS…TAFY), 547–567 (ILFP…IGIP), 608–628 (FSVS…KPFY), and 722–742 (FYLF…FFFY).

It belongs to the complex I subunit 5 family. NDH is composed of at least 16 different subunits, 5 of which are encoded in the nucleus.

It localises to the plastid. Its subcellular location is the chloroplast thylakoid membrane. The catalysed reaction is a plastoquinone + NADH + (n+1) H(+)(in) = a plastoquinol + NAD(+) + n H(+)(out). It catalyses the reaction a plastoquinone + NADPH + (n+1) H(+)(in) = a plastoquinol + NADP(+) + n H(+)(out). Functionally, NDH shuttles electrons from NAD(P)H:plastoquinone, via FMN and iron-sulfur (Fe-S) centers, to quinones in the photosynthetic chain and possibly in a chloroplast respiratory chain. The immediate electron acceptor for the enzyme in this species is believed to be plastoquinone. Couples the redox reaction to proton translocation, and thus conserves the redox energy in a proton gradient. The chain is NAD(P)H-quinone oxidoreductase subunit 5, chloroplastic (ndhF) from Draba nemorosa (Woodland whitlowgrass).